The sequence spans 326 residues: uncharacterized protein (326 aa).

2 consecutive transmembrane segments (helical) span residues 9–29 (WVVL…RWSL) and 33–53 (ISIC…ANSY). NADP(+) contacts are provided by aspartate 120, asparagine 148, tyrosine 214, lysine 218, and threonine 252. The active-site Proton acceptor is the tyrosine 214. Lysine 218 functions as the Lowers pKa of active site Tyr in the catalytic mechanism.

Belongs to the short-chain dehydrogenases/reductases (SDR) family.

The protein localises to the mitochondrion membrane. Its function is as follows. Involved in the resistance to DNA-damaging agents. This is an uncharacterized protein from Saccharomyces cerevisiae (strain ATCC 204508 / S288c) (Baker's yeast).